Here is a 234-residue protein sequence, read N- to C-terminus: Leucyl/phenylalanyl-tRNA--protein transferase (234 aa).

The protein belongs to the L/F-transferase family.

The protein localises to the cytoplasm. It catalyses the reaction N-terminal L-lysyl-[protein] + L-leucyl-tRNA(Leu) = N-terminal L-leucyl-L-lysyl-[protein] + tRNA(Leu) + H(+). The enzyme catalyses N-terminal L-arginyl-[protein] + L-leucyl-tRNA(Leu) = N-terminal L-leucyl-L-arginyl-[protein] + tRNA(Leu) + H(+). It carries out the reaction L-phenylalanyl-tRNA(Phe) + an N-terminal L-alpha-aminoacyl-[protein] = an N-terminal L-phenylalanyl-L-alpha-aminoacyl-[protein] + tRNA(Phe). Its function is as follows. Functions in the N-end rule pathway of protein degradation where it conjugates Leu, Phe and, less efficiently, Met from aminoacyl-tRNAs to the N-termini of proteins containing an N-terminal arginine or lysine. The protein is Leucyl/phenylalanyl-tRNA--protein transferase of Dechloromonas aromatica (strain RCB).